Here is a 277-residue protein sequence, read N- to C-terminus: Alternative cytochrome c oxidase subunit 2 (277 aa).

The Periplasmic segment spans residues 1-40; sequence MAVALILLLIAIGSVLFHLFSPWWWTPIATNWGYIDDTIN. The chain crosses the membrane as a helical span at residues 41-61; the sequence is ITFWITGFVFTAVILFMAYCV. At 62-83 the chain is on the cytoplasmic side; sequence FRFHHKEGRQAAYNPENKKLEW. Residues 84 to 104 traverse the membrane as a helical segment; the sequence is WLSVGTGVGVAAMLAPGLVVW. Residues 105 to 277 are Periplasmic-facing; the sequence is HQFVTVPADA…VRAKYNSGDD (173 aa). His-190, Cys-225, Cys-229, and His-233 together coordinate Cu cation.

Belongs to the cytochrome c oxidase subunit 2 family.

Its subcellular location is the cell membrane. The catalysed reaction is 4 Fe(II)-[cytochrome c] + O2 + 8 H(+)(in) = 4 Fe(III)-[cytochrome c] + 2 H2O + 4 H(+)(out). In terms of biological role, cytochrome c oxidase is the component of the respiratory chain that catalyzes the reduction of oxygen to water. Subunits 1-3 form the functional core of the enzyme complex. Subunit 2 transfers the electrons from cytochrome c via its binuclear copper A center to the bimetallic center of the catalytic subunit 1. This Bradyrhizobium diazoefficiens (strain JCM 10833 / BCRC 13528 / IAM 13628 / NBRC 14792 / USDA 110) protein is Alternative cytochrome c oxidase subunit 2 (coxM).